Reading from the N-terminus, the 195-residue chain is uncharacterized protein (195 aa).

The first 16 residues, 1–16, serve as a signal peptide directing secretion; it reads MIRTIIVFMLLTISFG.

This is an uncharacterized protein from Acanthamoeba polyphaga mimivirus (APMV).